A 1218-amino-acid chain; its full sequence is MIDVNSFNALKIGLASPEQIRSWSKGEVKKPETINYRTLKPEKEGLFCEKIFGPQKDWECHCGKYKRVRYKGIVCDRCGVEVTQSKVRRERMGHIELAAPVSHIWYFKGIPSRLGLLLNMSPRALEKVLYFASYVVIDPGETSLAKKQLLTETEYREYYDKFESQFKKGKGFKAMMGAEAIKELLKELDLEALTKELRNDLKTAKGQKKVRTVRRLEVAESFRKSGNKPEWMILDVIPVIPPDLRPMVQLDGGRFATSDLNDLYRRVINRNNRLKRLLNLGAPDIIVRNEKRMLQEAVDALIDNGRRGRAVTGPGNRPLKSLSDMLKGKQGRFRQNLLGKRVDYSGRSVIVVGPELKIYQCGLPKEMALELFKPFVMKRLVEKELSHNIKSAKRMVEKVRPEVWDVLEEVIKEHPVLLNRAPTLHRLGIQAFEPVLIEGRAIQIHPLVCPAYNADFDGDQMAVHLPLSAEAQAEARILMLASQNILNPKDGSPVATPTQDMVLGSYYLTLENTSDFKNDAYFSSPAEAVMAFRQKDIDMQEPIAVDVRNYEKKDFSLPENNKPSDSNLLITTVGKIIFNEIFPEDFPYVNGEKPGLNEYDWLKSGERIEDKLKQREPREAIQKGSLGDLVGHCYRKYGSTKTASILDKMKEVGYSYATKAGVTIGITDVAVPEKKHEIISDAEGKVDEVEKQHHRGLITPQERYTRVIDIWNNAKDSVTGAVMDNLDIFNPIYMMATSGARGNISQITQLAGMRGLMADPTGRIIDLPIKTNFREGLTVLEYFNSTHGARKGLADTALKTADSGYLTRRLVDVSQDVIVREEDCGETDGVEVGAITNGNEIIEGIGDRVVGRFAAADIRDRQGNMIVNRNELITEDAAEQIQEAKLDQVPIRSVLTCKTKNGVCVKCYGRDLATGAVANVGEAVGIIAAQSIGEPGTQLTMRTFHTGGVAGDDITQGLPRIEELFEARKPKGLAVISEIDGRITVKTEHNKRKVIVTPEKGEQKSYNIPYGARLKVKDGDEINAGDEITEGSINPHDLLKIKGVRGVQLYILQEVQKVYRMQGVDISDKHIEIIIRQMLKKVRIEEAGDTELLPGSYVDFFDFEKVNERIKEEGGEPAKAKSLLLGITKASLATDSFLSAASFQETTRVLTEAAIKGKVDPLIGLKENVIIGKLVPAGTGMPHYRNIDLAYNDEENEAQSDKSQDEQEIGEITVDMGE.

Positions 60, 62, 75, and 78 each coordinate Zn(2+). Mg(2+)-binding residues include Asp455, Asp457, and Asp459. The Zn(2+) site is built by Cys824, Cys897, Cys904, and Cys907. Residues 1195 to 1218 are disordered; it reads ENEAQSDKSQDEQEIGEITVDMGE.

Belongs to the RNA polymerase beta' chain family. In terms of assembly, the RNAP catalytic core consists of 2 alpha, 1 beta, 1 beta' and 1 omega subunit. When a sigma factor is associated with the core the holoenzyme is formed, which can initiate transcription. It depends on Mg(2+) as a cofactor. Requires Zn(2+) as cofactor.

The enzyme catalyses RNA(n) + a ribonucleoside 5'-triphosphate = RNA(n+1) + diphosphate. Its function is as follows. DNA-dependent RNA polymerase catalyzes the transcription of DNA into RNA using the four ribonucleoside triphosphates as substrates. The sequence is that of DNA-directed RNA polymerase subunit beta' from Natranaerobius thermophilus (strain ATCC BAA-1301 / DSM 18059 / JW/NM-WN-LF).